The chain runs to 491 residues: Aspartyl/glutamyl-tRNA(Asn/Gln) amidotransferase subunit B (491 aa).

Belongs to the GatB/GatE family. GatB subfamily. In terms of assembly, heterotrimer of A, B and C subunits.

The enzyme catalyses L-glutamyl-tRNA(Gln) + L-glutamine + ATP + H2O = L-glutaminyl-tRNA(Gln) + L-glutamate + ADP + phosphate + H(+). The catalysed reaction is L-aspartyl-tRNA(Asn) + L-glutamine + ATP + H2O = L-asparaginyl-tRNA(Asn) + L-glutamate + ADP + phosphate + 2 H(+). In terms of biological role, allows the formation of correctly charged Asn-tRNA(Asn) or Gln-tRNA(Gln) through the transamidation of misacylated Asp-tRNA(Asn) or Glu-tRNA(Gln) in organisms which lack either or both of asparaginyl-tRNA or glutaminyl-tRNA synthetases. The reaction takes place in the presence of glutamine and ATP through an activated phospho-Asp-tRNA(Asn) or phospho-Glu-tRNA(Gln). The sequence is that of Aspartyl/glutamyl-tRNA(Asn/Gln) amidotransferase subunit B from Nostoc punctiforme (strain ATCC 29133 / PCC 73102).